Here is a 554-residue protein sequence, read N- to C-terminus: Valerianol synthase TPS8 (554 aa).

A DDXXD motif motif is present at residues 288 to 292 (QHSVG). Residues Asp-307, Asp-311, Asp-452, Ser-456, and Glu-460 each coordinate Mg(2+).

This sequence belongs to the terpene synthase family. Mg(2+) is required as a cofactor.

It carries out the reaction (2E,6E)-farnesyl diphosphate + H2O = valerianol + diphosphate. It functions in the pathway secondary metabolite biosynthesis; terpenoid biosynthesis. In terms of biological role, terpene synthase that catalyzes the biosynthesis of the terpene valerianol. This is Valerianol synthase TPS8 from Camellia sinensis (Tea plant).